We begin with the raw amino-acid sequence, 112 residues long: MMKVLVVVALLVTLISYSSSEGIDDLEADELLSLMANEQTRAKACTPRFYDCSHDRHSCCRSELFKDVCTCFYPEGGDNEVCTCQQPKHLKYMEKAAGKAKKFGGKIKKWFG.

An N-terminal signal peptide occupies residues 1 to 20 (MMKVLVVVALLVTLISYSSS). The propeptide occupies 21 to 41 (EGIDDLEADELLSLMANEQTR). Cystine bridges form between cysteine 45–cysteine 60, cysteine 52–cysteine 69, cysteine 59–cysteine 84, and cysteine 71–cysteine 82.

Belongs to the neurotoxin 19 (CSTX) family. 01 subfamily. Expressed by the venom gland.

It localises to the secreted. This is Toxin-like structure LSTX-D10 from Lycosa singoriensis (Wolf spider).